The sequence spans 426 residues: Potassium channel subfamily K member 2 (426 aa).

The Cytoplasmic segment spans residues 1–61 (MLPSASRERP…TTINVMKWKT (61 aa)). Important for GNG4 binding and L-glutamate release in astrocytes stretches follow at residues 17–38 (AAPDLLDPKSAAQNSKPRLSFS) and 51–61 (DTTINVMKWKT). A helical membrane pass occupies residues 62-82 (VSTIFLVVVLYLIIGATVFKA). N-linked (GlcNAc...) asparagine glycosylation is found at Asn-110 and Asn-134. The segment at residues 144–170 (LGSSFFFAGTVITTIGFGNISPRTEGG) is an intramembrane region (pore-forming). K(+) contacts are provided by Thr-157, Ile-158, Gly-159, and Phe-160. The segment at 157–162 (TIGFGN) is selectivity filter 1. A helical transmembrane segment spans residues 172–192 (IFCIIYALLGIPLFGFLLAGV). Residues 193–223 (GDQLGTIFGKGIAKVEDTFIKWNVSQTKIRI) are Cytoplasmic-facing. The chain crosses the membrane as a helical span at residues 224–244 (ISTIIFILFGCVLFVALPAII). Positions 253-283 (ALDAIYFVVITLTTIGFGDYVAGGSDIEYLD) form an intramembrane region, pore-forming. The K(+) site is built by Thr-266, Ile-267, Gly-268, and Phe-269. The segment at 266 to 271 (TIGFGD) is selectivity filter 2. The helical transmembrane segment at 288–308 (VVWFWILVGLAYFAAVLSMIG) threads the bilayer. Residues 309–426 (DWLRVISKKT…EEIAVIENIK (118 aa)) are Cytoplasmic-facing. Positions 313–326 (VISKKTKEEVGEFR) are interaction with AKAP5. The segment at 337–385 (TAEFKETRRRLSVEIYDKFQRATSIKRKLSAELAGNHNQELTPCRRTLS) is essential for chloroform and halothane sensitivity. Ser-348 bears the Phosphoserine; by PKA mark.

The protein belongs to the two pore domain potassium channel (TC 1.A.1.8) family. Homodimer; disulfide-linked. Forms heterodimers with other 2-pore domain K(+) channel subunits, such as KCNK1, KCNK4, KCNK10 and KCNK18. Interacts with AKAP5; the channel is recruited to postsynaptic microdomains by AKAP5 where it can integrate neurotransmitter receptor signals. Part of a complex composed of AKAP5 and ADRB2. Upon AKAP5 binding, the channel is no longer sensitive to intracellular acidification, membrane stretch or arachidonic acid stimuli. Interacts with POPDC1; the interaction enhances KCNK2 surface expression and is inhibited by cAMP. Interacts (via N-terminus) with G-protein subunit GNG4 (via C-terminus); this interaction confers ion selectivity to L-glutamate and Cl(-) anions. In terms of processing, phosphorylation at Ser-348 controls the reversible conversion from a leak channel to a voltage-dependent channel. In terms of tissue distribution, detected in kidney, adrenal gland and brain where it is preferentially expressed in the amygdala but not found in thalamus, hypothalamus, hippocampus or substantia nigra.

It localises to the cell membrane. It is found in the endoplasmic reticulum membrane. The protein localises to the cell projection. The protein resides in the axon. Its subcellular location is the dendrite. It localises to the postsynaptic density membrane. It is found in the sarcolemma. It carries out the reaction K(+)(in) = K(+)(out). The catalysed reaction is L-glutamate(out) = L-glutamate(in). The enzyme catalyses chloride(in) = chloride(out). It catalyses the reaction Rb(+)(in) = Rb(+)(out). It carries out the reaction Cs(+)(in) = Cs(+)(out). Its activity is regulated as follows. Activated by various stimuli including intracellular acidic pH, mechanical stretch and polyunsaturated fatty acids such as arachidonic acid. Activated by volatile anesthetics such as chloroform, halothane, and isoflurane. K(+) channel that conducts voltage-dependent outward rectifying currents upon membrane depolarization. Voltage sensing is coupled to K(+) electrochemical gradient in an 'ion flux gating' mode where outward but not inward ion flow opens the gate. Converts to voltage-independent 'leak' conductance mode upon stimulation by various stimuli including mechanical membrane stretch, acidic pH, heat and lipids. Reversibly converts between a voltage-insensitive K(+) 'leak' channel and a voltage-dependent outward rectifying K(+) channel in a phosphorylation-dependent manner. Homo- and heterodimerizes to form functional channels with distinct regulatory and gating properties. In trigeminal ganglia sensory neurons, the heterodimer of KCNK2/TREK-1 and KCNK18/TRESK inhibits neuronal firing and neurogenic inflammation by stabilizing the resting membrane potential at K(+) equilibrium potential as well as by regulating the threshold of action potentials and the spike frequency. At trigeminal A-beta afferent nerves, the heterodimer of KCNK2/TREK-1 and KCNK4/TRAAK is mostly coexpressed at nodes of Ranvier where it conducts voltage-independent mechanosensitive and thermosensitive currents, allowing rapid action potential repolarization, high speed and high frequence saltatory conduction on myelinated nerves to ensure prompt sensory responses. In hippocampal astrocytes, the heterodimer of KCNK2/TREK-1 and KCNK1/TWIK-1 allows passive K(+) conductance under basal conditions, but changes ion selectivity and becomes permeable to L-glutamate and Cl(-) ions upon binding to G-protein subunit GNG4 in stimulated astrocytes. Mediates rapid L-glutamate release in response to activation of G-protein-coupled receptors, such as F2R and CNR1. In hippocampal pyramidal neurons, the homodimer of KCNK2/TREK-1 contributes to gamma-aminobutyric acid (GABA) B-induced slow inhibitory postsynaptic potential. Associates with AKAP5 and Gs-protein-coupled receptor B2AR at postsynaptic dense bodies and converts to a leak channel no longer sensitive to stimulation by arachidonic acid, acidic pH or mechanical stress, nor inhibited by Gq-coupled receptors but still under the negative control of Gs-coupled receptors. Permeable to other monovalent cations such as Rb(+) and Cs(+). In terms of biological role, does not display channel activity but reduces the channel activity of isoform 1 and isoform 2 and reduces cell surface expression of isoform 2. This is Potassium channel subfamily K member 2 from Homo sapiens (Human).